Consider the following 180-residue polypeptide: UPF0227 protein PC1_2487 (180 aa).

Belongs to the UPF0227 family.

The protein is UPF0227 protein PC1_2487 of Pectobacterium carotovorum subsp. carotovorum (strain PC1).